The following is a 228-amino-acid chain: Protein-L-isoaspartate O-methyltransferase (228 aa).

A disordered region spans residues 1-20 (MVAVSLKMSQPAAPPPPMGE). Ser76 is an active-site residue.

It belongs to the methyltransferase superfamily. L-isoaspartyl/D-aspartyl protein methyltransferase family.

The protein resides in the cytoplasm. It carries out the reaction [protein]-L-isoaspartate + S-adenosyl-L-methionine = [protein]-L-isoaspartate alpha-methyl ester + S-adenosyl-L-homocysteine. Catalyzes the methyl esterification of L-isoaspartyl residues in peptides and proteins that result from spontaneous decomposition of normal L-aspartyl and L-asparaginyl residues. It plays a role in the repair and/or degradation of damaged proteins. This chain is Protein-L-isoaspartate O-methyltransferase, found in Magnetococcus marinus (strain ATCC BAA-1437 / JCM 17883 / MC-1).